The sequence spans 391 residues: MDTSLAEEVQQTMATLAPNRFFFMSPYRSFTTSGCFARFDEPAVNGDSPDSPFQQKLAALFADAKAQGIKNPVMVGAIPFDPRQPSSLYIPESWQSFSRQEKQASARRFTRSQSLNVVERQAIPEQTTFEQMVARAAALTATPQVDKVVLSRLIDITTDAAIDSGVLLERLIAQNPVSYNFHVPLADGGVLLGASPELLLRKDGERFSSIPLAGSARRQPDEVLDREAGNRLLASEKDRHEHELVTQAMKEVLRERSSELHVPSSPQLITTPTLWHLATPFEGKANSQENALTLACLLHPTPALSGFPHQAATQVIAELEPFDRELFGGIVGWCDSEGNGEWVVTIRCAKLRENQVRLFAGAGIVPASSPLGEWRETGVKLSTMLNVFGLH.

Mg(2+) is bound by residues Thr-140, Thr-142, Val-145, and Asp-146. Lys-147 functions as the Proton acceptor in the catalytic mechanism. The active-site Proton donor is the Glu-197. 6 residues coordinate isochorismate: Gly-214, Ser-215, Glu-241, Ala-303, Arg-347, and Gly-361. A Mg(2+)-binding site is contributed by Glu-241. Mg(2+) is bound at residue Glu-376. Lys-380 provides a ligand contact to isochorismate.

The protein belongs to the isochorismate synthase family. As to quaternary structure, monomer. Forms a specific pairwise interaction with EntB; this interaction likely facilitates substrate channeling to connect the EntB and EntC active sites. Mg(2+) serves as cofactor.

The catalysed reaction is chorismate = isochorismate. The protein operates within siderophore biosynthesis; enterobactin biosynthesis. In terms of biological role, involved in the biosynthesis of the siderophore enterobactin (macrocyclic trimeric lactone of N-(2,3-dihydroxybenzoyl)-serine). Catalyzes the reversible conversion of chorismate to isochorismate. The sequence is that of Isochorismate synthase EntC from Escherichia coli O157:H7.